The sequence spans 950 residues: Translation initiation factor IF-2 (950 aa).

2 disordered regions span residues 57-254 (LAER…AVVI) and 304-328 (DVSRDKRRGRQPGRPISEEQAKSLS). 2 stretches are compositionally biased toward low complexity: residues 101 to 131 (AEPQYAEPQAEQAYEPEPQAAQPEAGAEPAA) and 139 to 169 (AAPLAAQAAPSPGAEAAAPAAPQAQPAQPAA). Over residues 170–215 (PAAPPAPTAQPSAPPPAAAQPRPPQPSAPSRPPPPGYRPAPPPGAR) the composition is skewed to pro residues. Residues 216–233 (PPVSAAPGAPGQPGAAGQ) are compositionally biased toward low complexity. The tr-type G domain maps to 449 to 618 (IRPPVVTVMG…ALQSEVLELK (170 aa)). The segment at 458–465 (GHVDHGKT) is G1. 458–465 (GHVDHGKT) contributes to the GTP binding site. The tract at residues 483–487 (GITQH) is G2. Positions 504–507 (DTPG) are G3. Residues 504–508 (DTPGH) and 558–561 (NKVD) contribute to the GTP site. The G4 stretch occupies residues 558-561 (NKVD). Residues 594-596 (SAR) are G5.

This sequence belongs to the TRAFAC class translation factor GTPase superfamily. Classic translation factor GTPase family. IF-2 subfamily.

The protein localises to the cytoplasm. Functionally, one of the essential components for the initiation of protein synthesis. Protects formylmethionyl-tRNA from spontaneous hydrolysis and promotes its binding to the 30S ribosomal subunits. Also involved in the hydrolysis of GTP during the formation of the 70S ribosomal complex. The polypeptide is Translation initiation factor IF-2 (Anaeromyxobacter dehalogenans (strain 2CP-C)).